The primary structure comprises 5202 residues: Usherin (5202 aa).

The first 31 residues, 1–31 (MNCPVLSLGSGFLFQVIEMLIFAYFASISLT), serve as a signal peptide directing secretion. Over 32-5042 (ESRGLFPRLE…KSTEFYSELW (5011 aa)) the chain is Extracellular. Residues 271–517 (QDFRLYQVAL…AVDEITISGR (247 aa)) enclose the Laminin N-terminal domain. N361 and N451 each carry an N-linked (GlcNAc...) asparagine glycan. 40 disulfides stabilise this stretch: C518/C527, C520/C536, C538/C549, C552/C572, C575/C584, C577/C605, C608/C617, C620/C638, C641/C655, C643/C662, C664/C673, C676/C691, C694/C708, C696/C715, C717/C726, C729/C744, C747/C759, C749/C766, C768/C777, C780/C792, C795/C808, C797/C815, C817/C826, C829/C844, C847/C861, C849/C868, C870/C879, C882/C897, C900/C913, C902/C920, C922/C931, C934/C948, C951/C963, C953/C970, C972/C982, C985/C999, C1002/C1014, C1004/C1021, C1023/C1032, and C1035/C1050. 10 Laminin EGF-like domains span residues 518 to 574 (CQCH…NCKP), 575 to 640 (CQCN…VCKP), 641 to 693 (CDCD…GCSP), 694 to 746 (CNCN…GCEP), 747 to 794 (CQCN…NCKA), 795 to 846 (CDCD…LCLP), 847 to 899 (CNCD…HCQM), 900 to 950 (CECD…GCLP), 951 to 1001 (CSCH…RCQP), and 1002 to 1052 (CNCH…GCSK). Residues N587 and N611 are each glycosylated (N-linked (GlcNAc...) asparagine). An N-linked (GlcNAc...) asparagine glycan is attached at N650. N697 carries N-linked (GlcNAc...) asparagine glycosylation. N-linked (GlcNAc...) asparagine glycans are attached at residues N839, N856, and N862. The N-linked (GlcNAc...) asparagine glycan is linked to N888. N944 carries N-linked (GlcNAc...) asparagine glycosylation. N1011 carries an N-linked (GlcNAc...) asparagine glycan. Fibronectin type-III domains are found at residues 1058–1146 (PPPR…TKPG), 1148–1244 (PEGN…APPQ), 1245–1363 (RLSP…SAPV), and 1364–1468 (FMIP…AAPA). 3 N-linked (GlcNAc...) asparagine glycosylation sites follow: N1071, N1151, and N1174. N-linked (GlcNAc...) asparagine glycans are attached at residues N1379, N1388, N1479, and N1635. Laminin G-like domains lie at 1517–1709 (MKGI…WEGC) and 1714–1891 (NEGA…LDGC). C1672 and C1709 form a disulfide bridge. N1779 carries N-linked (GlcNAc...) asparagine glycosylation. C1862 and C1891 form a disulfide bridge. 14 consecutive Fibronectin type-III domains span residues 1869 to 1955 (TRGA…AAPQ), 1957 to 2054 (VPTP…TPQE), 2055 to 2144 (APQE…LPPE), 2145 to 2239 (HVDS…TDED), 2243 to 2330 (GVPA…APPE), 2331 to 2433 (GTVN…MPPG), 2437 to 2531 (GVLP…TAED), 2535 to 2622 (PVVP…TLPG), 2624 to 2722 (PEGI…TRPS), 2726 to 2819 (GVQP…THPT), 2820 to 2923 (VPQN…TLAG), 2927 to 3018 (RGAN…TCDG), 3022 to 3112 (GMLP…TPSD), and 3113 to 3209 (IPTP…CCEE). N-linked (GlcNAc...) asparagine glycans are attached at residues N1903, N2011, N2014, N2048, N2130, N2182, N2195, N2258, N2285, N2322, N2377, N2382, N2407, and N2413. Residues N2581, N2584, N2656, N2710, N2770, and N2788 are each glycosylated (N-linked (GlcNAc...) asparagine). 5 N-linked (GlcNAc...) asparagine glycosylation sites follow: N2930, N2937, N2970, N3032, and N3099. 4 N-linked (GlcNAc...) asparagine glycosylation sites follow: N3217, N3330, N3419, and N3433. Cystine bridges form between C3371–C3444 and C3399–C3425. 16 Fibronectin type-III domains span residues 3403 to 3497 (CPAS…TKED), 3501 to 3589 (GVSP…TQGV), 3592 to 3682 (SILP…AAPE), 3684 to 3770 (VWVT…TPMS), 3774 to 3865 (EIYP…TPEA), 3866 to 3963 (APMD…TLEA), 3964 to 4067 (PPQD…SSPS), 4068 to 4153 (GLRN…TDEA), 4157 to 4261 (SQLA…TLQA), 4262 to 4357 (PPEG…AAPS), 4358 to 4445 (EVSP…ALPE), 4446 to 4530 (NMDS…TSPS), 4534 to 4630 (GMEP…TPEI), 4636 to 4733 (PPPH…TGPA), 4734 to 4827 (PPEG…THPA), and 4828 to 4927 (PPSG…SFTT). 5 N-linked (GlcNAc...) asparagine glycosylation sites follow: N3653, N3694, N3733, N3780, and N3849. N-linked (GlcNAc...) asparagine glycosylation is present at N3984. N-linked (GlcNAc...) asparagine glycosylation is found at N4202, N4226, N4317, and N4418. Residues 4518-4541 (ILSPLVKDRTSPSAPSGMEPPKLQ) form a disordered region. 5 N-linked (GlcNAc...) asparagine glycosylation sites follow: N4564, N4583, N4691, N4754, and N4800. 2 N-linked (GlcNAc...) asparagine glycosylation sites follow: N4943 and N4950. The helical transmembrane segment at 5043 to 5063 (FIVLMAMLGLILLAIFLSLIL) threads the bilayer. Residues 5064 to 5202 (QRKIHKEPYI…ERTTFTDTHL (139 aa)) are Cytoplasmic-facing. The PDZ-binding signature appears at 5200 to 5202 (THL).

Interacts with collagen IV and fibronectin via its laminin EGF-like domains. Interaction with collagen may be required for stable integration into the basement membrane. Interacts with NINL. Interacts with USH1C. Component of USH2 complex, composed of ADGRV1, PDZD7, USH2A and WHRN. Interacts with ADGRV1/MASS1 (via N-terminal PDZ domain). Interacts (via the cytoplasmic region) with WHRN. Interacts (via the cytoplasmic region) with PDZD7. Interacts (via the cytoplasmic region) with VEZT and MYO7A (via MyTH4-FERM domains); the interaction associates VEZT with the USH2 complex at the stereocilia base. Present in the basement membrane of many, but not all tissues. Expressed in retina, cochlea, small and large intestine, pancreas, bladder, prostate, esophagus, trachea, thymus, salivary glands, placenta, ovary, fallopian tube, uterus and testis. Absent in many other tissues such as heart, lung, liver, kidney and brain. In the retina, it is present in the basement membranes in the Bruch's layer choroid capillary basement membranes, where it localizes just beneath the retinal pigment epithelial cells (at protein level). Weakly expressed. Isoform 2 is expressed in fetal eye, cochlea and heart, and at very low level in brain, CNS, intestine, skeleton, tongue, kidney and lung. Isoform 2 is not expressed in stomach and liver. In adult tissues, isoform 2 is expressed in neural retina and testis, and at low level in brain, heart, kidney and liver. Isoform 1 displays a similar pattern of expression but is expressed at very low level in fetal cochlea.

The protein resides in the cell projection. It localises to the stereocilium membrane. The protein localises to the secreted. Involved in hearing and vision as member of the USH2 complex. In the inner ear, required for the maintenance of the hair bundle ankle formation, which connects growing stereocilia in developing cochlear hair cells. In retina photoreceptors, the USH2 complex is required for the maintenance of periciliary membrane complex that seems to play a role in regulating intracellular protein transport. This chain is Usherin (USH2A), found in Homo sapiens (Human).